Reading from the N-terminus, the 408-residue chain is GTPase Obg (408 aa).

One can recognise an Obg domain in the interval 1-159 (MKFVDEVSIR…RDLKMEMKVL (159 aa)). The tract at residues 127–148 (NTRFKSSTNRAPRQTTPGKPGE) is disordered. A compositionally biased stretch (polar residues) spans 129 to 143 (RFKSSTNRAPRQTTP). One can recognise an OBG-type G domain in the interval 160–333 (ADVGLLGLPN…LSHDLMRYLE (174 aa)). GTP is bound by residues 166–173 (GLPNAGKS), 191–195 (FTTLV), 213–216 (DIPG), 283–286 (NKAD), and 314–316 (SAI). Mg(2+) is bound by residues serine 173 and threonine 193. The span at 385 to 401 (GDDDGWDDDFEDDEDGP) shows a compositional bias: acidic residues. The segment at 385–408 (GDDDGWDDDFEDDEDGPEIIYVRD) is disordered.

It belongs to the TRAFAC class OBG-HflX-like GTPase superfamily. OBG GTPase family. In terms of assembly, monomer. Mg(2+) serves as cofactor.

It localises to the cytoplasm. An essential GTPase which binds GTP, GDP and possibly (p)ppGpp with moderate affinity, with high nucleotide exchange rates and a fairly low GTP hydrolysis rate. Plays a role in control of the cell cycle, stress response, ribosome biogenesis and in those bacteria that undergo differentiation, in morphogenesis control. In Pseudomonas putida (strain ATCC 700007 / DSM 6899 / JCM 31910 / BCRC 17059 / LMG 24140 / F1), this protein is GTPase Obg.